The following is a 490-amino-acid chain: Cytochrome P450 71A25 (490 aa).

A helical membrane pass occupies residues 1 to 21 (MMMMIILLWSIIFMTILFLKK). C431 provides a ligand contact to heme.

It belongs to the cytochrome P450 family. The cofactor is heme.

It localises to the membrane. The chain is Cytochrome P450 71A25 (CYP71A25) from Arabidopsis thaliana (Mouse-ear cress).